Here is a 465-residue protein sequence, read N- to C-terminus: Ribosomal oxygenase 2 (465 aa).

One can recognise a JmjC domain in the interval 139 to 271 (QPQRFKDELW…NSWGDYLLDS (133 aa)). Residues histidine 179, aspartate 181, and histidine 240 each contribute to the Fe cation site. A Phosphoserine modification is found at serine 309.

It belongs to the ROX family. MINA53 subfamily. The cofactor is Fe(2+).

The protein localises to the nucleus. Its subcellular location is the nucleolus. The catalysed reaction is L-histidyl-[ribosomal protein uL15] + 2-oxoglutarate + O2 = (3S)-3-hydroxy-L-histidyl-[ribosomal protein uL15] + succinate + CO2. It carries out the reaction L-histidyl-[protein] + 2-oxoglutarate + O2 = (3S)-3-hydroxy-L-histidyl-[protein] + succinate + CO2. Functionally, oxygenase that can act as both a histone lysine demethylase and a ribosomal histidine hydroxylase. Is involved in the demethylation of trimethylated 'Lys-9' on histone H3 (H3K9me3), leading to an increase in ribosomal RNA expression. Also catalyzes the hydroxylation of 60S ribosomal protein L27a on 'His-39'. May play an important role in cell growth and survival. May be involved in ribosome biogenesis, most likely during the assembly process of pre-ribosomal particles. The polypeptide is Ribosomal oxygenase 2 (Rattus norvegicus (Rat)).